Reading from the N-terminus, the 256-residue chain is L-tyrosine degradation gene cluster protein hmgX (256 aa).

The protein belongs to the TTC36 family.

The protein resides in the cytoplasm. Its function is as follows. Part of the L-tyrosine degradation gene cluster that mediates the biosynthesis of the brownish pigment pyomelanin as an alternative melanin. The 4-hydroxyphenylpyruvate dioxygenase hppD catalyzes the conversion of 4-hydroxyphenylpyruvate to homogentisic acid (HGA). The protein hmgX is crucial for this conversion and thus, probably functions as an accessory factor to mediate specific activity of hppD. The homogentisate 1,2-dioxygenase hmgA is then involved in the cleavage of the aromatic ring of HGA and its conversion to 4-maleylacetoacetate. When hmgA activity is lowered by the cell wall integrity (CWI) signaling pathway, HGA accumulates and leads to the production of pyomelanin through benzoquinone acetic acid after oxidation and polymerization. On the opposite, in non-stress conditions, both hppD and hmgA activities are balanced and HGA is degraded into 4-maleylacetoacetate. 4-maleylacetoacetate is further converted to 4-fumarylacetoacetate by the maleylacetoacetate isomerase maiA, which is degraded into fumarate and acetoacetate by the fumarylacetoacetase fahA. The protein is L-tyrosine degradation gene cluster protein hmgX of Aspergillus fumigatus (strain ATCC MYA-4609 / CBS 101355 / FGSC A1100 / Af293) (Neosartorya fumigata).